The sequence spans 283 residues: NAD kinase (283 aa).

Catalysis depends on Asp68, which acts as the Proton acceptor. NAD(+)-binding positions include 68-69 (DG), 142-143 (ND), Arg153, Asp172, 183-188 (TAYSLS), and Gln242.

It belongs to the NAD kinase family. A divalent metal cation is required as a cofactor.

The protein localises to the cytoplasm. It carries out the reaction NAD(+) + ATP = ADP + NADP(+) + H(+). In terms of biological role, involved in the regulation of the intracellular balance of NAD and NADP, and is a key enzyme in the biosynthesis of NADP. Catalyzes specifically the phosphorylation on 2'-hydroxyl of the adenosine moiety of NAD to yield NADP. In Thermoanaerobacter pseudethanolicus (strain ATCC 33223 / 39E) (Clostridium thermohydrosulfuricum), this protein is NAD kinase.